The sequence spans 497 residues: MKGVLSLSLLPLLAAPSPILVDTIHRDAAPILSSHNSKEVPDSYIVVFKKNVSPASAAAHQVWVQDLHTTVMAKRSLRKRNQFPFKNDAFDGLKHTYDIAGSIMGYSGHFDEEVIEQVRRHPDVQYIEKDSEVHAWDEPVTENNAPWGLARVSHRDSLTMGTFNKYLYAANGGEGVDVYVIDTGTNIEHVDFEGRAHWGKTIPTGDDDVDGNGHGTHCSGTVAGKKYGVAKKANVYAVKVLRSNGSGTMSDVVKGVEWAAGAHLSKMVEARKKGNKAFKGSAANMSLGGGKSFTLDLAVNAAVDAGIHFAVAAGNDNADACNYSPAAAEKAVTVGASTLADERAYFSNYGKCTDIFAPGLNILSTWIGSKYAVNTISGTSMASPHVAGLLAYFLSLQPEQDSAFAVSPISPAKLKKDMIAIATKNALTDIPADTPNILAWNGGGSSNYTAIIQQGGYEATRPGNKAAQLTEKIEKLGQNTASQLGAIYSEIKDAFTI.

The signal sequence occupies residues 1–16; that stretch reads MKGVLSLSLLPLLAAP. A propeptide spanning residues 17-136 is cleaved from the precursor; the sequence is SPILVDTIHR…IEKDSEVHAW (120 aa). In terms of domain architecture, Inhibitor I9 spans 43-134; sequence SYIVVFKKNV…QYIEKDSEVH (92 aa). The Peptidase S8 domain maps to 146–452; it reads PWGLARVSHR…GGSSNYTAII (307 aa). Residues Asp-182 and His-214 each act as charge relay system in the active site. Asn-244 and Asn-284 each carry an N-linked (GlcNAc...) asparagine glycan. The Charge relay system role is filled by Ser-380. Asn-447 carries an N-linked (GlcNAc...) asparagine glycan.

Belongs to the peptidase S8 family.

It is found in the secreted. Its function is as follows. Secreted subtilisin-like serine protease with keratinolytic activity that contributes to pathogenicity. This chain is Subtilisin-like protease CPC735_031240, found in Coccidioides posadasii (strain C735) (Valley fever fungus).